The sequence spans 620 residues: Chaperone protein HscA homolog (620 aa).

This sequence belongs to the heat shock protein 70 family.

Functionally, chaperone involved in the maturation of iron-sulfur cluster-containing proteins. Has a low intrinsic ATPase activity which is markedly stimulated by HscB. The protein is Chaperone protein HscA homolog of Shewanella putrefaciens (strain CN-32 / ATCC BAA-453).